The sequence spans 156 residues: Ribosomal RNA large subunit methyltransferase H (156 aa).

Residues Leu73, Gly104, and 123-128 each bind S-adenosyl-L-methionine; that span reads LSALTL.

Belongs to the RNA methyltransferase RlmH family. Homodimer.

The protein localises to the cytoplasm. It catalyses the reaction pseudouridine(1915) in 23S rRNA + S-adenosyl-L-methionine = N(3)-methylpseudouridine(1915) in 23S rRNA + S-adenosyl-L-homocysteine + H(+). Its function is as follows. Specifically methylates the pseudouridine at position 1915 (m3Psi1915) in 23S rRNA. The chain is Ribosomal RNA large subunit methyltransferase H from Shewanella sediminis (strain HAW-EB3).